The following is a 412-amino-acid chain: Cellobiose 2-epimerase (412 aa).

Belongs to the cellobiose 2-epimerase family.

It carries out the reaction D-cellobiose = beta-D-glucosyl-(1-&gt;4)-D-mannopyranose. Catalyzes the reversible epimerization of cellobiose to 4-O-beta-D-glucopyranosyl-D-mannose (Glc-Man). Can also use lactose, epilactose, mannobiose and cellotriose. Highly specific for oligosaccharides linked by the beta-1,4-glycosidic linkage. Shows preference for lactose. This Rhodothermus marinus (Rhodothermus obamensis) protein is Cellobiose 2-epimerase (ce).